Consider the following 126-residue polypeptide: Histone H2B 7 (126 aa).

Over residues 1 to 12 the composition is skewed to low complexity; the sequence is MPEPAKSAPAPK. A disordered region spans residues 1–35; it reads MPEPAKSAPAPKKGSKKAVTKTQKKGDKKRKRARK. N6-acetyllysine is present on residues Lys-6 and Lys-13. Residues 13 to 34 show a composition bias toward basic residues; the sequence is KGSKKAVTKTQKKGDKKRKRAR. A Phosphoserine modification is found at Ser-15. An N6-acetyllysine mark is found at Lys-16 and Lys-21. Residue Ser-113 is glycosylated (O-linked (GlcNAc) serine). Residue Lys-121 forms a Glycyl lysine isopeptide (Lys-Gly) (interchain with G-Cter in ubiquitin) linkage.

Belongs to the histone H2B family. As to quaternary structure, the nucleosome is a histone octamer containing two molecules each of H2A, H2B, H3 and H4 assembled in one H3-H4 heterotetramer and two H2A-H2B heterodimers. The octamer wraps approximately 147 bp of DNA. Monoubiquitination of Lys-121 by the BRE1 gives a specific tag for epigenetic transcriptional activation and is also prerequisite for histone H3 'Lys-4' and 'Lys-79' methylation. Post-translationally, phosphorylated on Ser-15 during apoptosis; which facilitates apoptotic chromatin condensation. In terms of processing, glcNAcylation at Ser-113 promotes monoubiquitination of Lys-121. It fluctuates in response to extracellular glucose, and associates with transcribed genes.

It localises to the nucleus. It is found in the chromosome. Functionally, core component of nucleosome. Nucleosomes wrap and compact DNA into chromatin, limiting DNA accessibility to the cellular machineries which require DNA as a template. Histones thereby play a central role in transcription regulation, DNA repair, DNA replication and chromosomal stability. DNA accessibility is regulated via a complex set of post-translational modifications of histones, also called histone code, and nucleosome remodeling. In Gallus gallus (Chicken), this protein is Histone H2B 7 (H2B-VII).